The primary structure comprises 212 residues: Cyclin-dependent kinase inhibitor 3 (212 aa).

A compositionally biased stretch (polar residues) spans 1-12 (MKPPSSIQTSEF). The segment at 1–20 (MKPPSSIQTSEFDSSDEEPI) is disordered. The interaction with CDK2 stretch occupies residues 1–34 (MKPPSSIQTSEFDSSDEEPIEDEQTPIHISWLSL). Residues 33–201 (SLSRVNCSQF…FRDKLAAHLS (169 aa)) form the Tyrosine-protein phosphatase domain. Residue cysteine 140 is the Phosphocysteine intermediate of the active site.

This sequence belongs to the protein-tyrosine phosphatase family. In terms of assembly, interacts with cyclin-dependent kinases such as CDK1, CDK2 and CDK3. Does not interact with CDK4. Interacts (via C-terminus) with phosphorylated CDK2 (via C-terminal helix). Interacts with MS4A3 (via C-terminus); the interaction enhances CDKN3 enzymatic activity.

Its subcellular location is the cytoplasm. The protein resides in the perinuclear region. The catalysed reaction is O-phospho-L-tyrosyl-[protein] + H2O = L-tyrosyl-[protein] + phosphate. It catalyses the reaction O-phospho-L-threonyl-[protein] + H2O = L-threonyl-[protein] + phosphate. It carries out the reaction O-phospho-L-seryl-[protein] + H2O = L-seryl-[protein] + phosphate. May play a role in cell cycle regulation. Dual specificity CC phosphatase active toward substrates containing either phosphotyrosine or phosphoserine residues. Dephosphorylates CDK2 at 'Thr-160' in a cyclin-dependent manner. This chain is Cyclin-dependent kinase inhibitor 3, found in Homo sapiens (Human).